The sequence spans 189 residues: UPF0149 protein VSAL_I2539 (189 aa).

Belongs to the UPF0149 family.

The sequence is that of UPF0149 protein VSAL_I2539 from Aliivibrio salmonicida (strain LFI1238) (Vibrio salmonicida (strain LFI1238)).